A 290-amino-acid polypeptide reads, in one-letter code: TIMELESS-interacting protein (290 aa).

The tract at residues 1–59 is disordered; the sequence is MLEPQENGLTDLPDYEHIEDETFPPFPPPASPGREDGEGAEPEEESGRGAPVPVPPKRT. An interaction with TIMELESS region spans residues 67-143; sequence LNAERLISER…KEVQTCLKRI (77 aa). 2 positions are modified to phosphoserine: Ser194 and Ser222. Residues 221-242 show a composition bias toward polar residues; sequence NSQSLGNDLSVNTPSTQTSEAG. The disordered stretch occupies residues 221–290; the sequence is NSQSLGNDLS…VEETQLDQSF (70 aa). Phosphothreonine occurs at positions 233 and 244.

Belongs to the CSM3 family. In terms of assembly, interacts with TIMELESS (via N-terminus), which impairs TIMELESS self-association. Associates with the MCM2-7 complex. Interacts with RPA2, PRDX2.

It is found in the cytoplasm. The protein resides in the nucleus. In terms of biological role, plays an important role in the control of DNA replication and the maintenance of replication fork stability. Important for cell survival after DNA damage or replication stress. May be specifically required for the ATR-CHEK1 pathway in the replication checkpoint induced by hydroxyurea or ultraviolet light. Forms a complex with TIMELESS and this complex regulates DNA replication processes under both normal and stress conditions, stabilizes replication forks and influences both CHEK1 phosphorylation and the intra-S phase checkpoint in response to genotoxic stress. This chain is TIMELESS-interacting protein (TIPIN), found in Bos taurus (Bovine).